Reading from the N-terminus, the 448-residue chain is Phosphoglucosamine mutase (448 aa).

S100 functions as the Phosphoserine intermediate in the catalytic mechanism. Mg(2+) contacts are provided by S100, D240, D242, and D244. S100 carries the phosphoserine modification.

This sequence belongs to the phosphohexose mutase family. It depends on Mg(2+) as a cofactor. Post-translationally, activated by phosphorylation.

The enzyme catalyses alpha-D-glucosamine 1-phosphate = D-glucosamine 6-phosphate. Functionally, catalyzes the conversion of glucosamine-6-phosphate to glucosamine-1-phosphate. The chain is Phosphoglucosamine mutase from Alkaliphilus metalliredigens (strain QYMF).